The chain runs to 475 residues: UDP-N-acetylmuramoylalanine--D-glutamate ligase (475 aa).

130 to 136 (GTNGKTT) contacts ATP.

The protein belongs to the MurCDEF family.

The protein localises to the cytoplasm. It carries out the reaction UDP-N-acetyl-alpha-D-muramoyl-L-alanine + D-glutamate + ATP = UDP-N-acetyl-alpha-D-muramoyl-L-alanyl-D-glutamate + ADP + phosphate + H(+). It functions in the pathway cell wall biogenesis; peptidoglycan biosynthesis. In terms of biological role, cell wall formation. Catalyzes the addition of glutamate to the nucleotide precursor UDP-N-acetylmuramoyl-L-alanine (UMA). This is UDP-N-acetylmuramoylalanine--D-glutamate ligase from Corynebacterium efficiens (strain DSM 44549 / YS-314 / AJ 12310 / JCM 11189 / NBRC 100395).